The following is a 185-amino-acid chain: A-type ATP synthase subunit E (185 aa).

The protein belongs to the V-ATPase E subunit family. Has multiple subunits with at least A(3), B(3), C, D, E, F, H, I and proteolipid K(x).

It is found in the cell membrane. Component of the A-type ATP synthase that produces ATP from ADP in the presence of a proton gradient across the membrane. The chain is A-type ATP synthase subunit E from Thermoplasma acidophilum (strain ATCC 25905 / DSM 1728 / JCM 9062 / NBRC 15155 / AMRC-C165).